Here is a 355-residue protein sequence, read N- to C-terminus: Guanine nucleotide-binding protein G(z) subunit alpha (355 aa).

A compositionally biased stretch (basic and acidic residues) spans 1 to 14; it reads MGCRQSSEEKEAAR. The interval 1–26 is disordered; sequence MGCRQSSEEKEAARRSRRIDRHLRSE. The N-myristoyl glycine moiety is linked to residue Gly-2. A lipid anchor (S-palmitoyl cysteine) is attached at Cys-3. One can recognise a G-alpha domain in the interval 32–355; it reads REIKLLLLGT…QNNLKYIGLC (324 aa). The interval 35 to 48 is G1 motif; it reads KLLLLGTSNSGKST. GTP-binding positions include 40 to 47, 176 to 182, 201 to 205, 270 to 273, and Ala-327; these read GTSNSGKS, LRSRDMT, DVGGQ, and NKKD. Residue Ser-47 coordinates Mg(2+). A G2 motif region spans residues 174–182; it reads DILRSRDMT. An ADP-ribosylarginine; by cholera toxin modification is found at Arg-179. Mg(2+) is bound at residue Thr-182. The G3 motif stretch occupies residues 197–206; it reads FKMVDVGGQR. Positions 266-273 are G4 motif; sequence ILFLNKKD. The G5 motif stretch occupies residues 325 to 330; sequence TCATDT.

The protein belongs to the G-alpha family. G(i/o/t/z) subfamily. G-proteins are composed of 3 units; alpha, beta and gamma. The alpha chain contains the guanine nucleotide binding site. Interacts with ADGRB2.

It localises to the membrane. In terms of biological role, guanine nucleotide-binding proteins (G proteins) are involved as modulators or transducers in various transmembrane signaling systems. This Homo sapiens (Human) protein is Guanine nucleotide-binding protein G(z) subunit alpha (GNAZ).